The primary structure comprises 109 residues: RNA-binding protein Hfq (109 aa).

The Sm domain occupies Asp-9 to Val-68. Positions Pro-77 to Glu-109 are disordered.

The protein belongs to the Hfq family. Homohexamer.

Its function is as follows. RNA chaperone that binds small regulatory RNA (sRNAs) and mRNAs to facilitate mRNA translational regulation in response to envelope stress, environmental stress and changes in metabolite concentrations. Also binds with high specificity to tRNAs. The sequence is that of RNA-binding protein Hfq from Francisella tularensis subsp. tularensis (strain FSC 198).